The chain runs to 146 residues: Deoxyuridine 5'-triphosphate nucleotidohydrolase (146 aa).

Substrate is bound by residues Arg66–Gly68, Asn79, Thr83–Asp85, and Lys93.

Belongs to the dUTPase family. Requires Mg(2+) as cofactor.

It carries out the reaction dUTP + H2O = dUMP + diphosphate + H(+). The protein operates within pyrimidine metabolism; dUMP biosynthesis; dUMP from dCTP (dUTP route): step 2/2. In terms of biological role, this enzyme is involved in nucleotide metabolism: it produces dUMP, the immediate precursor of thymidine nucleotides and it decreases the intracellular concentration of dUTP so that uracil cannot be incorporated into DNA. The polypeptide is Deoxyuridine 5'-triphosphate nucleotidohydrolase (Zymomonas mobilis subsp. mobilis (strain ATCC 31821 / ZM4 / CP4)).